Here is a 118-residue protein sequence, read N- to C-terminus: MARIAGINVPDHKHAVIALTAIFGIGKTRSQIICAASGIAESTKLKDLDETQIEALRTEVATFTVEGDLRREVSMNIKRLMDLGCYRGLRHRRSLPVRGQRSKTNARTRKGPRKAIKK.

The interval 94–118 is disordered; sequence SLPVRGQRSKTNARTRKGPRKAIKK.

It belongs to the universal ribosomal protein uS13 family. Part of the 30S ribosomal subunit. Forms a loose heterodimer with protein S19. Forms two bridges to the 50S subunit in the 70S ribosome.

In terms of biological role, located at the top of the head of the 30S subunit, it contacts several helices of the 16S rRNA. In the 70S ribosome it contacts the 23S rRNA (bridge B1a) and protein L5 of the 50S subunit (bridge B1b), connecting the 2 subunits; these bridges are implicated in subunit movement. Contacts the tRNAs in the A and P-sites. This Psychromonas ingrahamii (strain DSM 17664 / CCUG 51855 / 37) protein is Small ribosomal subunit protein uS13.